The primary structure comprises 710 residues: DNA-directed RNA polymerase III subunit RPC5 (710 aa).

Residues 146–155 are compositionally biased toward basic and acidic residues; it reads DAKHREREAA. The interval 146 to 169 is disordered; sequence DAKHREREAANEAGDSSQDEAEED. Phosphoserine occurs at positions 161 and 162. Residue K171 forms a Glycyl lysine isopeptide (Lys-Gly) (interchain with G-Cter in SUMO2) linkage. Residue S192 is modified to Phosphoserine. Y224 carries the post-translational modification Phosphotyrosine. A Glycyl lysine isopeptide (Lys-Gly) (interchain with G-Cter in SUMO2) cross-link involves residue K432. Residue K498 forms a Glycyl lysine isopeptide (Lys-Gly) (interchain with G-Cter in SUMO1); alternate linkage. Residue K498 forms a Glycyl lysine isopeptide (Lys-Gly) (interchain with G-Cter in SUMO2); alternate linkage. A disordered region spans residues 498–526; the sequence is KEEPLSEEEADGAELEAEEEEPMDTAPST. Residues 502 to 520 show a composition bias toward acidic residues; that stretch reads LSEEEADGAELEAEEEEPM. S503 is subject to Phosphoserine. The interval 558–710 is required for Pol III complex stability; that stretch reads NPVACELKAF…MWYLKGTVQS (153 aa). K661 is covalently cross-linked (Glycyl lysine isopeptide (Lys-Gly) (interchain with G-Cter in SUMO2)).

As to quaternary structure, component of the RNA polymerase III complex consisting of at least 17 subunits: a ten-subunit horseshoe-shaped catalytic core composed of POLR3A/RPC1, POLR3B/RPC2, POLR1C/RPAC1, POLR1D/RPAC2, POLR3K/RPC10, POLR2E/RPABC1, POLR2F/RPABC2, POLR2H/RPABC3, POLR2K/RPABC4 and POLR2L/RPABC5; the stalk composed of two subunits POLR3H/RPC8 and CRCP/RPC9, forming a structural mobile part that protrudes out of the core and functions primarily in transcription initiation; and additional subunits homologous to general transcription factors of the RNA polymerase II machinery, POLR3D/RPC4-POLR3E/RPC5 heterodimer and POLR3/CRPC3-POLR3F/RPC6-POLR3G/RPC7 heterotrimer.

It localises to the nucleus. Functionally, DNA-dependent RNA polymerase catalyzes the transcription of DNA into RNA using the four ribonucleoside triphosphates as substrates. Specific peripheric component of RNA polymerase III (Pol III) which synthesizes small non-coding RNAs including 5S rRNA, snRNAs, tRNAs and miRNAs from at least 500 distinct genomic loci. Assembles with POLR3D/RPC4 forming a subcomplex that binds the Pol III core. Enables recruitment of Pol III at transcription initiation site and drives transcription initiation from both type 2 and type 3 DNA promoters. Required for efficient transcription termination and reinitiation. Plays a key role in sensing and limiting infection by intracellular bacteria and DNA viruses. Acts as a nuclear and cytosolic DNA sensor involved in innate immune response. Can sense non-self dsDNA that serves as template for transcription into dsRNA. The non-self RNA polymerase III transcripts, such as Epstein-Barr virus-encoded RNAs (EBERs) induce type I interferon and NF-kappa-B through the RIG-I pathway. This is DNA-directed RNA polymerase III subunit RPC5 from Mus musculus (Mouse).